The primary structure comprises 701 residues: DNA-directed RNA polymerase subunit beta' (701 aa).

Zn(2+) is bound by residues Cys-76, Cys-78, Cys-94, and Cys-97. Residues Asp-511, Asp-513, and Asp-515 each coordinate Mg(2+).

Belongs to the RNA polymerase beta' chain family. RpoC1 subfamily. In plastids the minimal PEP RNA polymerase catalytic core is composed of four subunits: alpha, beta, beta', and beta''. When a (nuclear-encoded) sigma factor is associated with the core the holoenzyme is formed, which can initiate transcription. Mg(2+) is required as a cofactor. It depends on Zn(2+) as a cofactor.

It localises to the plastid. The protein resides in the chloroplast. It catalyses the reaction RNA(n) + a ribonucleoside 5'-triphosphate = RNA(n+1) + diphosphate. In terms of biological role, DNA-dependent RNA polymerase catalyzes the transcription of DNA into RNA using the four ribonucleoside triphosphates as substrates. This is DNA-directed RNA polymerase subunit beta' from Pelargonium hortorum (Common geranium).